Reading from the N-terminus, the 505-residue chain is MNIKPEEITSIIKSQIEGYESKLETVDSGTIIEIGDGIARIYGLQNCMAGELLEFPNDVYGMALNLEQDNVGCVLLGSEEGIKEGDIVKSTGKVVEVPVGEEMLGRVVNALGQPIDGKGPIKAEDSKPVDIKATGVIDRQSVNQPLQTGIKAIDSMIPIGKGQRELIIGDRQTGKTAIAIDTILNQKGKDVICIYVAIGQKQSTVAHIVNTFEEMGAMDYSIVVAATASDSAPLQYLAPYSGVTIAENFMFKGKDVLIVYDDLSKHAVAYRTMSLLLRRPPGREAYPGDVFYLHSRLLERAAKLSQKLGGGSITALPIIETLAGDVAGYIPTNVISITDGQIFLESELFYAGQRPAVNSGISVSRVGGSAQIKAMKKLSGTLRLELAQYRELAAFAQFGSDLDKESKKRLEKGKRLTEMMKQPQYKPMPVEKQIMILYAVVNEYVMDIDVSKLSAFESGLFEYVDAHYRDLGKQILEKKELTDDISSQLTKAINEYKKIFLAEEQ.

Residue 169–176 (GDRQTGKT) coordinates ATP.

It belongs to the ATPase alpha/beta chains family. F-type ATPases have 2 components, CF(1) - the catalytic core - and CF(0) - the membrane proton channel. CF(1) has five subunits: alpha(3), beta(3), gamma(1), delta(1), epsilon(1). CF(0) has three main subunits: a(1), b(2) and c(9-12). The alpha and beta chains form an alternating ring which encloses part of the gamma chain. CF(1) is attached to CF(0) by a central stalk formed by the gamma and epsilon chains, while a peripheral stalk is formed by the delta and b chains.

The protein localises to the cell membrane. It catalyses the reaction ATP + H2O + 4 H(+)(in) = ADP + phosphate + 5 H(+)(out). Its function is as follows. Produces ATP from ADP in the presence of a proton gradient across the membrane. The alpha chain is a regulatory subunit. This is ATP synthase subunit alpha from Clostridium acetobutylicum (strain ATCC 824 / DSM 792 / JCM 1419 / IAM 19013 / LMG 5710 / NBRC 13948 / NRRL B-527 / VKM B-1787 / 2291 / W).